The primary structure comprises 362 residues: Porin Omp2b (362 aa).

Positions 1-22 (MNIKSLLLGSAAALVAASGAQA) are cleaved as a signal peptide.

This sequence belongs to the alphaproteobacteria porin family. Homotrimer.

It localises to the cell outer membrane. In terms of biological role, forms passive diffusion pores that allow small molecular weight hydrophilic materials across the outer membrane. The polypeptide is Porin Omp2b (omp2b) (Brucella neotomae).